Consider the following 375-residue polypeptide: 23S rRNA (uracil(747)-C(5))-methyltransferase RlmC (375 aa).

Cys-3, Cys-11, Cys-14, and Cys-87 together coordinate [4Fe-4S] cluster. Positions 212, 241, 262, and 307 each coordinate S-adenosyl-L-methionine. The active-site Nucleophile is the Cys-334.

Belongs to the class I-like SAM-binding methyltransferase superfamily. RNA M5U methyltransferase family. RlmC subfamily.

It carries out the reaction uridine(747) in 23S rRNA + S-adenosyl-L-methionine = 5-methyluridine(747) in 23S rRNA + S-adenosyl-L-homocysteine + H(+). In terms of biological role, catalyzes the formation of 5-methyl-uridine at position 747 (m5U747) in 23S rRNA. This Escherichia coli O127:H6 (strain E2348/69 / EPEC) protein is 23S rRNA (uracil(747)-C(5))-methyltransferase RlmC.